The chain runs to 294 residues: 4-hydroxy-tetrahydrodipicolinate synthase (294 aa).

Threonine 44 lines the pyruvate pocket. Tyrosine 132 functions as the Proton donor/acceptor in the catalytic mechanism. Lysine 161 acts as the Schiff-base intermediate with substrate in catalysis. A pyruvate-binding site is contributed by isoleucine 206.

It belongs to the DapA family. As to quaternary structure, homotetramer; dimer of dimers.

The protein localises to the cytoplasm. It carries out the reaction L-aspartate 4-semialdehyde + pyruvate = (2S,4S)-4-hydroxy-2,3,4,5-tetrahydrodipicolinate + H2O + H(+). Its pathway is amino-acid biosynthesis; L-lysine biosynthesis via DAP pathway; (S)-tetrahydrodipicolinate from L-aspartate: step 3/4. Is not inhibited by (S)-lysine, in contrast to E.coli DapA. Its function is as follows. Catalyzes the condensation of (S)-aspartate-beta-semialdehyde [(S)-ASA] and pyruvate to 4-hydroxy-tetrahydrodipicolinate (HTPA). The protein is 4-hydroxy-tetrahydrodipicolinate synthase of Thermotoga maritima (strain ATCC 43589 / DSM 3109 / JCM 10099 / NBRC 100826 / MSB8).